A 553-amino-acid chain; its full sequence is ATP synthase F(1) complex subunit alpha, mitochondrial (553 aa).

The N-terminal 43 residues, 1 to 43 (MLSVRIAAAVARALPRRAGLVSKNALGSSFVGTRNLHASNTRL), are a transit peptide targeting the mitochondrion. Residues serine 53 and serine 65 each carry the phosphoserine modification. Serine 76 bears the Phosphoserine; alternate mark. O-linked (GlcNAc) serine; alternate glycosylation occurs at serine 76. Serine 106 carries the post-translational modification Phosphoserine. N6-acetyllysine occurs at positions 123, 126, and 132. Threonine 134 is modified (phosphothreonine). Lysine 161 carries the post-translational modification N6-acetyllysine; alternate. At lysine 161 the chain carries N6-succinyllysine; alternate. Serine 166 carries the post-translational modification Phosphoserine. N6-acetyllysine; alternate is present on lysine 167. Lysine 167 bears the N6-succinyllysine; alternate mark. Position 184 is a phosphoserine (serine 184). Arginine 204 bears the Omega-N-methylarginine mark. Residues glutamine 215, glycine 217, lysine 218, threonine 219, and serine 220 each coordinate ATP. Residue threonine 219 coordinates Mg(2+). N6-acetyllysine; alternate is present on residues lysine 230 and lysine 239. N6-succinyllysine; alternate is present on residues lysine 230 and lysine 239. N6-acetyllysine is present on lysine 240. N6-acetyllysine; alternate is present on residues lysine 261 and lysine 305. Residues lysine 261 and lysine 305 each carry the N6-succinyllysine; alternate modification. Aspartate 312 is a binding site for Mg(2+). Position 427 is an N6-acetyllysine; alternate (lysine 427). The residue at position 427 (lysine 427) is an N6-succinyllysine; alternate. The residue at position 434 (lysine 434) is an N6-acetyllysine. Residues glutamine 473 and glutamine 475 each coordinate ATP. 4 positions are modified to N6-acetyllysine; alternate: lysine 498, lysine 506, lysine 531, and lysine 539. N6-succinyllysine; alternate is present on residues lysine 498, lysine 506, lysine 531, and lysine 539. The residue at position 541 (lysine 541) is an N6-acetyllysine.

It belongs to the ATPase alpha/beta chains family. In terms of assembly, homotrimer. Component of the ATP synthase complex composed at least of ATP5F1A/subunit alpha, ATP5F1B/subunit beta, ATP5MC1/subunit c (homooctomer), MT-ATP6/subunit a, MT-ATP8/subunit 8, ATP5ME/subunit e, ATP5MF/subunit f, ATP5MG/subunit g, ATP5MK/subunit k, ATP5MJ/subunit j, ATP5F1C/subunit gamma, ATP5F1D/subunit delta, ATP5F1E/subunit epsilon, ATP5PF/subunit F6, ATP5PB/subunit b, ATP5PD/subunit d, ATP5PO/subunit OSCP. ATP synthase complex consists of a soluble F(1) head domain (subunits alpha(3) and beta(3)) - the catalytic core - and a membrane F(0) domain - the membrane proton channel (subunits c, a, 8, e, f, g, k and j). These two domains are linked by a central stalk (subunits gamma, delta, and epsilon) rotating inside the F1 region and a stationary peripheral stalk (subunits F6, b, d, and OSCP). Interacts with ATPAF2. Interacts with HRG; the interaction occurs on the surface of T-cells and alters the cell morphology when associated with concanavalin (in vitro). Interacts with PLG (angiostatin peptide); the interaction inhibits most of the angiogenic properties of angiostatin. Interacts with BLOC1S1. Interacts with BCL2L1 isoform BCL-X(L); the interaction mediates the association of BCL2L1 isoform BCL-X(L) with the mitochondrial membrane F(1)F(0) ATP synthase and enhances neurons metabolic efficiency. Interacts with CLN5 and PPT1. Interacts with S100A1; this interaction increases F1-ATPase activity. Interacts with ABCB7; this interaction allows the regulation of cellular iron homeostasis and cellular reactive oxygen species (ROS) levels in cardiomyocytes. Post-translationally, acetylated on lysine residues. BLOC1S1 is required for acetylation. As to expression, expressed in flagella of epididymal sperm.

The protein localises to the mitochondrion. It localises to the mitochondrion inner membrane. The protein resides in the cell membrane. In terms of biological role, subunit alpha, of the mitochondrial membrane ATP synthase complex (F(1)F(0) ATP synthase or Complex V) that produces ATP from ADP in the presence of a proton gradient across the membrane which is generated by electron transport complexes of the respiratory chain. ATP synthase complex consist of a soluble F(1) head domain - the catalytic core - and a membrane F(1) domain - the membrane proton channel. These two domains are linked by a central stalk rotating inside the F(1) region and a stationary peripheral stalk. During catalysis, ATP synthesis in the catalytic domain of F(1) is coupled via a rotary mechanism of the central stalk subunits to proton translocation. In vivo, can only synthesize ATP although its ATP hydrolase activity can be activated artificially in vitro. With the catalytic subunit beta (ATP5F1B), forms the catalytic core in the F(1) domain. Subunit alpha does not bear the catalytic high-affinity ATP-binding sites. The chain is ATP synthase F(1) complex subunit alpha, mitochondrial from Rattus norvegicus (Rat).